Reading from the N-terminus, the 373-residue chain is GTP cyclohydrolase 1 type 2 homolog (373 aa).

A divalent metal cation-binding residues include His67, His68, Asp106, His333, and Glu336.

This sequence belongs to the GTP cyclohydrolase I type 2/NIF3 family. As to quaternary structure, homohexamer.

The polypeptide is GTP cyclohydrolase 1 type 2 homolog (Listeria innocua serovar 6a (strain ATCC BAA-680 / CLIP 11262)).